Consider the following 214-residue polypeptide: Alpha-S1-casein (214 aa).

A signal peptide spans 1-15 (MKLLILTCLVAVALA). Ser27 carries the phosphoserine; in allele A modification. Residue Ser56 is modified to Phosphoserine; in allele C. Residues Ser61 and Ser63 each carry the phosphoserine modification. Residues 69 to 91 (MEDAKQMKAGSSSSSEEIVPNSA) form a disordered region. Ser79 carries the phosphoserine; in alleles A and C modification. Position 80 is a phosphoserine (Ser80). Ser81 carries the post-translational modification Phosphoserine; in alleles A and C. Ser82 is modified (phosphoserine). A Phosphoserine; in alleles A and C modification is found at Ser83. Position 90 is a phosphoserine (Ser90). The segment at 105-111 (RYLGYLE) is opioid-like peptide sequence. Residue Ser130 is modified to Phosphoserine.

The protein belongs to the alpha-casein family. In terms of tissue distribution, mammary gland specific. Secreted in milk.

It localises to the secreted. Functionally, important role in the capacity of milk to transport calcium phosphate. The chain is Alpha-S1-casein (CSN1S1) from Ovis aries (Sheep).